A 298-amino-acid chain; its full sequence is uncharacterized protein (298 aa).

Residues 1–17 (MLTKSAENKRNRKDDSM) are compositionally biased toward basic and acidic residues. The interval 1 to 22 (MLTKSAENKRNRKDDSMRPGQQ) is disordered. Positions 167-227 (NKELTGTVYR…EDGSVNLSLL (61 aa)) constitute an S1 motif domain.

This is an uncharacterized protein from Bacillus subtilis (strain 168).